A 57-amino-acid polypeptide reads, in one-letter code: Large ribosomal subunit protein bL32 (57 aa).

Residues 1–38 (MAVQQNKPTRSKRGMRRSHDALTAVTSLSVDQTSGEKH) form a disordered region. A compositionally biased stretch (polar residues) spans 24–33 (AVTSLSVDQT).

This sequence belongs to the bacterial ribosomal protein bL32 family.

In Enterobacter sp. (strain 638), this protein is Large ribosomal subunit protein bL32.